Here is a 172-residue protein sequence, read N- to C-terminus: 3-phenylpropionate/cinnamic acid dioxygenase subunit beta (172 aa).

Belongs to the bacterial ring-hydroxylating dioxygenase beta subunit family. As to quaternary structure, this dioxygenase system consists of four proteins: the two subunits of the hydroxylase component (HcaE and HcaF), a ferredoxin (HcaC) and a ferredoxin reductase (HcaD).

The catalysed reaction is 3-phenylpropanoate + NADH + O2 + H(+) = 3-(cis-5,6-dihydroxycyclohexa-1,3-dien-1-yl)propanoate + NAD(+). It carries out the reaction (E)-cinnamate + NADH + O2 + H(+) = (2E)-3-(cis-5,6-dihydroxycyclohexa-1,3-dien-1-yl)prop-2-enoate + NAD(+). The protein operates within aromatic compound metabolism; 3-phenylpropanoate degradation. Part of the multicomponent 3-phenylpropionate dioxygenase. Converts 3-phenylpropionic acid (PP) and cinnamic acid (CI) into 3-phenylpropionate-dihydrodiol (PP-dihydrodiol) and cinnamic acid-dihydrodiol (CI-dihydrodiol), respectively. This is 3-phenylpropionate/cinnamic acid dioxygenase subunit beta from Escherichia coli O17:K52:H18 (strain UMN026 / ExPEC).